We begin with the raw amino-acid sequence, 181 residues long: Lysozyme B (181 aa).

Positions 1–19 (MRISFFLLILAVIIGYAYG) are cleaved as a signal peptide. The propeptide occupies 139-181 (LTDSRPLGPFNVTEEEKAQLFIDHEIAMAQCEAEKTCNGFDLE).

It belongs to the dictyostelium lysozyme family. Contains six disulfide bonds.

The protein localises to the cytoplasmic vesicle lumen. The enzyme catalyses Hydrolysis of (1-&gt;4)-beta-linkages between N-acetylmuramic acid and N-acetyl-D-glucosamine residues in a peptidoglycan and between N-acetyl-D-glucosamine residues in chitodextrins.. Functionally, has antibacterial activity. The protein is Lysozyme B (alyB) of Dictyostelium discoideum (Social amoeba).